Here is a 445-residue protein sequence, read N- to C-terminus: Probable glycine dehydrogenase (decarboxylating) subunit 1 (445 aa).

The protein belongs to the GcvP family. N-terminal subunit subfamily. In terms of assembly, the glycine cleavage system is composed of four proteins: P, T, L and H. In this organism, the P 'protein' is a heterodimer of two subunits.

The catalysed reaction is N(6)-[(R)-lipoyl]-L-lysyl-[glycine-cleavage complex H protein] + glycine + H(+) = N(6)-[(R)-S(8)-aminomethyldihydrolipoyl]-L-lysyl-[glycine-cleavage complex H protein] + CO2. Its function is as follows. The glycine cleavage system catalyzes the degradation of glycine. The P protein binds the alpha-amino group of glycine through its pyridoxal phosphate cofactor; CO(2) is released and the remaining methylamine moiety is then transferred to the lipoamide cofactor of the H protein. The chain is Probable glycine dehydrogenase (decarboxylating) subunit 1 from Anaeromyxobacter dehalogenans (strain 2CP-1 / ATCC BAA-258).